The primary structure comprises 150 residues: Small ribosomal subunit protein uS7cz/uS7cy (150 aa).

This sequence belongs to the universal ribosomal protein uS7 family. As to quaternary structure, part of the 30S ribosomal subunit.

The protein localises to the plastid. The protein resides in the chloroplast. Its function is as follows. One of the primary rRNA binding proteins, it binds directly to 16S rRNA where it nucleates assembly of the head domain of the 30S subunit. This is Small ribosomal subunit protein uS7cz/uS7cy (rps7-A) from Adiantum capillus-veneris (Maidenhair fern).